Consider the following 143-residue polypeptide: uncharacterized protein (143 aa).

The region spanning 5–137 is the HTH marR-type domain; sequence DARLASDLSL…LRNAADLILE (133 aa). Residues 51–74 constitute a DNA-binding region (H-T-H motif); the sequence is PGALAIRERVRPPSMTRVIASLAD.

Homodimer.

This is an uncharacterized protein from Mycobacterium leprae (strain TN).